A 420-amino-acid polypeptide reads, in one-letter code: MILIKNVFVNGKRQDILIEGNKIKKIGEVKKEEIENAEIIDGKNKIAIPGLINTHTHIPMTLFRGVADDLPLMEWLNNYIWPMEAKLNEEIVYWGTLLGCIEMIRSGTTTFNDMYFFLEGIAKAVDESGMRAVLAYGMIDLFDEERRERELKNAEKYINYINSLNNSRIMPALGPHAPYTCSKELLMEVNNLAKKYNVPIHIHLNETLDEIKMVKEKTGMEPFIYLNSFGFFDDVRAIAAHCVHLTDEEIKIMKQKNINVSHNPISNLKLASGVAPIPKLLAEGINVTLGTDGCGSNNNLNLFEEIKVSAILHKGVNLNPTVVKAEEAFNFATKNGAKALNIKAGEIREGYLADIVLINLDKPYLYPKENIMSHLVYAFNGFVDDVIIDGNIVMRDGEILTVDEEKVYEKAEEMYEILRS.

Histidine 55 and histidine 57 together coordinate Zn(2+). 2 residues coordinate substrate: glutamate 84 and histidine 176. Histidine 203 lines the Zn(2+) pocket. The substrate site is built by glutamate 206 and aspartate 292. Aspartate 292 contributes to the Zn(2+) binding site.

This sequence belongs to the metallo-dependent hydrolases superfamily. MTA/SAH deaminase family. Homotetramer. The cofactor is Zn(2+).

It catalyses the reaction 5'-deoxyadenosine + H2O + H(+) = 5'-deoxyinosine + NH4(+). The catalysed reaction is S-adenosyl-L-homocysteine + H2O + H(+) = S-inosyl-L-homocysteine + NH4(+). It carries out the reaction S-methyl-5'-thioadenosine + H2O + H(+) = S-methyl-5'-thioinosine + NH4(+). The enzyme catalyses adenosine + H2O + H(+) = inosine + NH4(+). It participates in amino-acid biosynthesis; S-adenosyl-L-methionine biosynthesis. Catalyzes the deamination of three SAM-derived enzymatic products, namely 5'-deoxyadenosine, S-adenosyl-L-homocysteine, and 5'-methylthioadenosine, to produce the inosine analogs. Can also deaminate adenosine. The preferred substrate for this enzyme is 5'-deoxyadenosine, but all these substrates are efficiently deaminated. Likely functions in a S-adenosyl-L-methionine (SAM) recycling pathway from S-adenosyl-L-homocysteine (SAH) produced from SAM-dependent methylation reactions. May also be involved in the recycling of 5'-deoxyadenosine, whereupon the 5'-deoxyribose moiety of 5'-deoxyinosine is further metabolized to deoxyhexoses used for the biosynthesis of aromatic amino acids in methanogens. This chain is 5'-deoxyadenosine deaminase, found in Methanocaldococcus jannaschii (strain ATCC 43067 / DSM 2661 / JAL-1 / JCM 10045 / NBRC 100440) (Methanococcus jannaschii).